Consider the following 700-residue polypeptide: Acyl-coenzyme A oxidase 2 (700 aa).

Belongs to the acyl-CoA oxidase family. Heteropentamer composed of five different subunits. Requires FAD as cofactor.

Its subcellular location is the peroxisome. It carries out the reaction a 2,3-saturated acyl-CoA + O2 = a (2E)-enoyl-CoA + H2O2. Its pathway is lipid metabolism; peroxisomal fatty acid beta-oxidation. Its function is as follows. Oxidizes strain chain acyl-CoAs with a chain length of 10 to 14 carbons. Also active toward the 2S isomers of acyl-CoA-esters containing a 2-methyl group. The polypeptide is Acyl-coenzyme A oxidase 2 (POX2) (Yarrowia lipolytica (strain CLIB 122 / E 150) (Yeast)).